We begin with the raw amino-acid sequence, 1241 residues long: High-affinity potassium transport protein (1241 aa).

Transmembrane regions (helical) follow at residues 49 to 70 (NFIA…ILLY) and 78 to 98 (IDAL…TVDV). The N-linked (GlcNAc...) asparagine glycan is linked to Asn100. A helical transmembrane segment spans residues 107 to 127 (IILYIICCISTPIAVHSCLAF). 3 disordered regions span residues 162–241 (TART…SLDD), 253–316 (KYHG…TPED), and 329–570 (EGTA…QLQQ). The segment covering 164–177 (RTMTKSKTGGTQRV) has biased composition (polar residues). Composition is skewed to basic and acidic residues over residues 181–191 (GKSDKRDDFQE) and 199–214 (VNRD…HNSR). Residues 215-238 (DSNSNANTNSSNNNSINHNGSSGS) are compositionally biased toward low complexity. Asn223, Asn227, Asn233, Asn257, Asn274, Asn353, and Asn364 each carry an N-linked (GlcNAc...) asparagine glycan. Polar residues-rich tracts occupy residues 268-280 (NTAT…QKLK) and 345-365 (TDGT…TMNE). A compositionally biased stretch (basic and acidic residues) spans 366–375 (SKIRIQDKGA). A compositionally biased stretch (polar residues) spans 380–411 (DQDSVLHSSNSSACTSDEDSLPTNFGGTTPSL). N-linked (GlcNAc...) asparagine glycans are attached at residues Asn389 and Asn442. 2 stretches are compositionally biased toward basic residues: residues 446–455 (PPRKASKSKR) and 482–497 (HLPK…KRRL). The segment covering 498 to 509 (STGSIDKNSSSD) has biased composition (polar residues). Asn505 and Asn538 each carry an N-linked (GlcNAc...) asparagine glycan. Acidic residues predominate over residues 520-545 (NDDDDGNEGDNMEEYFADNESGDEDD). Residues 561-570 (KQQQQHQLQQ) are compositionally biased toward low complexity. N-linked (GlcNAc...) asparagine glycosylation is found at Asn584, Asn660, Asn681, Asn691, and Asn741. A disordered region spans residues 677–714 (NSHRNGSEDVSSDSNETTYPLNGNNDHSQNDANGYPTY). Polar residues predominate over residues 684 to 708 (EDVSSDSNETTYPLNGNNDHSQNDA). The next 5 helical transmembrane spans lie at 784–806 (ILVV…WINL), 819–840 (VSPT…GLTL), 844–864 (SMMS…FIII), 868–888 (GFPI…PDLS), and 904–924 (CFTL…LVGL). A glycan (N-linked (GlcNAc...) asparagine) is linked at Asn925. The next 2 helical transmembrane spans lie at 929–949 (WILF…SKGY) and 977–997 (SIQV…AISI). Positions 1011–1073 (YGEMGGKPED…ENENPNEEST (63 aa)) are disordered. The segment covering 1021-1041 (TDTEEDGDCDDEDDDNEEEES) has biased composition (acidic residues). A compositionally biased stretch (basic residues) spans 1050–1062 (GKSKKETKKKKKR). Transmembrane regions (helical) follow at residues 1084–1104 (QLSF…ICER) and 1117–1137 (VFTI…SLGY). Residue Asn1141 is glycosylated (N-linked (GlcNAc...) asparagine). Residues 1222-1241 (DELKHKRSLSRSSKRSTKTN) form a disordered region. Residues 1226 to 1241 (HKRSLSRSSKRSTKTN) show a composition bias toward basic residues.

This sequence belongs to the TrkH potassium transport family.

It is found in the membrane. In terms of biological role, this protein is required for high-affinity potassium transport. In Saccharomyces uvarum (Yeast), this protein is High-affinity potassium transport protein (TRK1).